The sequence spans 360 residues: Lipid-A-disaccharide synthase (360 aa).

This sequence belongs to the LpxB family.

The enzyme catalyses a lipid X + a UDP-2-N,3-O-bis[(3R)-3-hydroxyacyl]-alpha-D-glucosamine = a lipid A disaccharide + UDP + H(+). Its pathway is bacterial outer membrane biogenesis; LPS lipid A biosynthesis. Its function is as follows. Condensation of UDP-2,3-diacylglucosamine and 2,3-diacylglucosamine-1-phosphate to form lipid A disaccharide, a precursor of lipid A, a phosphorylated glycolipid that anchors the lipopolysaccharide to the outer membrane of the cell. The polypeptide is Lipid-A-disaccharide synthase (Helicobacter pylori (strain Shi470)).